Consider the following 293-residue polypeptide: MTENNDIKMVIITGMSGAGKTVALQSFEDLGYFCVDNLPPMLLPKFIELMADSKGKMNKVALGIDLRGREFFEHLWGALDDLSERTWIIPHILFLDAKDSTLVTRYKETRRSHPLAPTGLPLKGIEAERNLLTDMKARANIVLDTSDLKPKELREKIVHLFSTETEQAFRVNVMSFGFKYGIPIDADLVFDVRFLPNPYYIPHMKPLTGLDEEVSSYVLKFNETHKFLEKLTDLITFMLPHYKREGKSQLVIAIGCTGGQHRSVTLTEYLGKHLKPEYSVHVSHRDVEKRKGH.

14–21 (GMSGAGKT) contributes to the ATP binding site. 65 to 68 (DLRG) lines the GTP pocket.

Belongs to the RapZ-like family.

Displays ATPase and GTPase activities. The polypeptide is Nucleotide-binding protein BC_5156 (Bacillus cereus (strain ATCC 14579 / DSM 31 / CCUG 7414 / JCM 2152 / NBRC 15305 / NCIMB 9373 / NCTC 2599 / NRRL B-3711)).